The sequence spans 663 residues: Probable potassium transport system protein Kup (663 aa).

Residues 1 to 23 form a disordered region; the sequence is MSDNPSSRAGPEVVPTPPPSPAA. The next 12 helical transmembrane spans lie at 81 to 101, 137 to 157, 173 to 193, 201 to 221, 224 to 244, 248 to 268, 283 to 303, 315 to 335, 373 to 393, 399 to 419, 433 to 453, and 455 to 475; these read PANVLGVLSLVFWAMTFVVTF, LLIILGLFGAALLYGDGVITP, PALEHWVVPVTVGILALLFFI, VGAVFGPVMLVWFLCIAILGV, ILFDATILQAVLPTHAVAFFA, WHGFLVLGGVVLVITGGEALY, WLLVAMPALMLNYMGQGAILL, LLVPGWALYPMIAVATAAAIV, IYVPEVNALLGAATIALVLGF, LAAAYGIAVTGTMAITTLLFH, AWPLTLLFLLVDLAFFGANIV, and VEEGGWFPLAAAAFVFTLLST.

It belongs to the HAK/KUP transporter (TC 2.A.72) family.

Its subcellular location is the cell inner membrane. It carries out the reaction K(+)(in) + H(+)(in) = K(+)(out) + H(+)(out). Functionally, transport of potassium into the cell. Likely operates as a K(+):H(+) symporter. The polypeptide is Probable potassium transport system protein Kup (Anaeromyxobacter sp. (strain Fw109-5)).